The chain runs to 33 residues: Kappa-sparatoxin-Hv1a (33 aa).

Disulfide bonds link Cys2–Cys17, Cys9–Cys22, and Cys16–Cys27. Tryptophan amide is present on Trp33.

In terms of tissue distribution, expressed by the venom gland.

Its subcellular location is the secreted. In terms of biological role, blocks transient outward voltage-gated potassium channels in rat ventricular myocytes (thus prolonging action-potential duration) and rat Kv4.2/KCNA4 channels expressed in Xenopus oocytes. Is also a weak blocker of calcium channels in rat cerebellar granule cells. This is Kappa-sparatoxin-Hv1a from Heteropoda venatoria (Brown huntsman spider).